Here is a 276-residue protein sequence, read N- to C-terminus: Protein MGF 360-15R (276 aa).

The protein belongs to the asfivirus MGF 360 family.

In terms of biological role, plays a role in virus cell tropism, and may be required for efficient virus replication in macrophages. This chain is Protein MGF 360-15R, found in Ornithodoros (relapsing fever ticks).